We begin with the raw amino-acid sequence, 2215 residues long: MVILQKGDYVWMDLKSGQEFDVPIGAVVKLCDSGQIQVVDDEDNEHWISPQNATHIKPMHPTSVHGVEDMIRLGDLNEAGILRNLLIRYRDHLIYTYTGSILVAVNPYQLLSIYSPEHIRQYTNKKIGEMPPHIFAIADNCYFNMKRNNRDQCCIISGESGAGKTESTKLILQFLAAISGQHSWIEQQVLEATPILEAFGNAKTIRNDNSSRFGKYIDIHFNKRGAIEGAKIEQYLLEKSRVCRQAPDERNYHVFYCMLEGMNEEEKKKLGLGQAADYNYLAMGNCITCEGRVDSQEYANIRSAMKVLMFTDTENWEISKLLAAILHMGNLQYEARTFENLDACEVLFSPSLATAASLLEVNPPDLMSCLTSRTLITRGETVSTPLSREQALDVRDAFVKGIYGRLFVWIVEKINAAIYKPPPLEVKNSRRSIGLLDIFGFENFTVNSFEQLCINFANEHLQQFFVRHVFKLEQEEYDLESIDWLHIEFTDNQEALDMIANRPMNVISLIDEESKFPKGTDATMLHKLNSQHKLNANYVPPKNSHETQFGINHFAGVVYYESQGFLEKNRDTLHGDIIQLVHSSRNKFIKQIFQADVAMGAETRKRSPTLSSQFKRSLELLMRTLGACQPFFVRCIKPNEFKKPMLFDRHLCVRQLRYSGMMETIRIRHAGYPIRYSFVEFVERYRVLLPGVKPAYKQGDLRGTCQRMAEAVLGTHDDWQIGKTKIFLKDHHDMLLEVERDKAITDRVILLQKVIRGFKDRSNFLRLKSAATLIQRHWRGHHCRKNYELIRLGFLRLQALHRSRKLHKQYRLARQRIIEFQARCRAYLVRKAFRHRLWAVITVQAYARGMIARRLHRRLRVEYQRRLEAERMRLAEEEKLRKEMSAKKAKEEAERKHQERLAQLAREDAERELKEKEEARRKKELLEQMEKARHEPINHSDMVDKMFGFLGTSGSLPGQEGQAPSGFEDLERGRREMVEEDVDAALPLPDEDEEDLSEYKFAKFAATYFQGTTTHSYTRRPLKQPLLYHDDEGDQLAALAVWITILRFMGDLPEPKYHTAMSDGSEKIPVMTKIYETLGKKTYKRELQALQGEGETQLPEGQKKTSVRHKLVHLTLKKKSKLTEEVTKRLNDGESTVQGNSMLEDRPTSNLEKLHFIIGNGILRPALRDEIYCQISKQLTHNPSKSSYARGWILVSLCVGCFAPSEKFVKYLRNFIHGGPPGYAPYCEERLRRTFVNGTRTQPPSWLELQATKSKKPIMLPVTFMDGTTKTLLTDSATTARELCNALADKISLKDRFGFSLYIALFDKVSSLGSGSDHVMDAISQCEQYAKEQGAQERNAPWRLFFRKEVFTPWHNPSEDNVATNLIYQQVVRGVKFGEYRCEKEDDLAELASQQYFVDYGSEMILERLLSLVPTYIPDREITPLKNLEKWAQLAIAAHKKGIYAQRRTDSQKVKEDVVNYARFKWPLLFSRFYEAYKFSGPPLPKSDVIVAVNWTGVYFVDEQEQVLLELSFPEIMAVSSSRECRVLLSLGCSDLGCATCQSGRAGLTPAGPCSPCWSCRGTKMMAPSFTLATIKGDEYTFTSSNAEDIRDLVVTFLEGLRKRSKYVVALQDNPNPAGEESGFLSFAKGDLIILDHDTGEQVMNSGWANGINERTKQRGDFPTDCVYVMPTVTLPPREIVALVTMTPDQRQDVVRLLQLRTAEPEVRAKPYTLEEFSYDYFRPPPKHTLSRVMVSKARGKDRLWSHTREPLKQALLKKILGSEELSQEACMAFVAVLKYMGDYPSKRMRSVNELTDQIFEWALKAEPLKDEAYVQILKQLTDNHIRYSEERGWELLWLCTGLFPPSNILLPHVQRFLQSRKHCPLAIDCLQRLQKALRNGSRKYPPHLVEVEAIQHKTTQIFHKVYFPDDTDEAFEVESSTKAKDFCQNIASRLLLKSSEGFSLFVKIADKVISVPENDFFFDFVRHLTDWIKKARPIKDGIVPSLTYQVFFMKKLWTTTVPGKDPMADSIFHYYQELPKYLRGYHKCTREEVLQLGALIYRVKFEEDKSYFPSIPKLLRELVPQDLIRQVSPDDWKRSIVAYFNKHAGKSKEEAKLAFLKLIFKWPTFGSAFFEVKQTTEPNFPEILLIAINKYGVSLIDPRTKDILTTHPFTKISNWSSGNTYFHITIGNLVRGSKLLCETSLGYKMDDLLTSYISQMLTAMSKQRNSRSGR.

Residues 65-741 form the Myosin motor domain; the sequence is HGVEDMIRLG…HDMLLEVERD (677 aa). 158–165 contacts ATP; that stretch reads GESGAGKT. Residues 632–639 form an actin-binding region; sequence FVRCIKPN. IQ domains are found at residues 745 to 765, 768 to 788, 791 to 811, 814 to 834, and 837 to 857; these read TDRVILLQKVIRGFKDRSNFL, KSAATLIQRHWRGHHCRKNYE, RLGFLRLQALHRSRKLHKQYR, RQRIIEFQARCRAYLVRKAFR, and LWAVITVQAYARGMIARRLHR. The interval 858–935 is SAH; sequence RLRVEYQRRL…LEQMEKARHE (78 aa). One can recognise a MyTH4 1 domain in the interval 1017–1253; that stretch reads YTRRPLKQPL…PSWLELQATK (237 aa). The FERM 1 domain occupies 1258–1602; sequence IMLPVTFMDG…LVVTFLEGLR (345 aa). Phosphothreonine is present on Thr1563. At Ser1569 the chain carries Phosphoserine. Thr1571 carries the post-translational modification Phosphothreonine. The 70-residue stretch at 1603 to 1672 folds into the SH3 domain; sequence KRSKYVVALQ…PTDCVYVMPT (70 aa). Residues 1747–1896 form the MyTH4 2 domain; that stretch reads HTREPLKQAL…PHLVEVEAIQ (150 aa). Positions 1902-2205 constitute an FERM 2 domain; sequence IFHKVYFPDD…SYISQMLTAM (304 aa).

It belongs to the TRAFAC class myosin-kinesin ATPase superfamily. Myosin family. As to quaternary structure, might homodimerize in a two headed molecule through the formation of a coiled-coil rod. Identified in a complex with USH1C and USH1G. Interacts with MYRIP. Interacts with RPE65. Interacts with CIB2. May interact with CALM. Interacts with WHRN. Interacts with PLEKHB1 (via PH domain). Interacts with PCDH15. Interacts with TWF2. Interacts with USH1G. Interacts with MYH9. Interacts (via MyTH4-FERM domains) with cytoplasmic regions of ADGRV1 and USH2A. Interacts with PDZD7 (via MyTH4-FERM domains). Interacts with CALML4. Detected in mechanosensory stereocilia of cochlea hair cells (at protein level). Expressed in the retina, cochlea, kidney and liver.

The protein localises to the cytoplasm. Its subcellular location is the cell cortex. It localises to the cytoskeleton. The protein resides in the synapse. Myosins are actin-based motor molecules with ATPase activity. Unconventional myosins serve in intracellular movements. Their highly divergent tails bind to membranous compartments, which are then moved relative to actin filaments. In the retina, plays an important role in the renewal of the outer photoreceptor disks. Plays an important role in the distribution and migration of retinal pigment epithelial (RPE) melanosomes and phagosomes, and in the regulation of opsin transport in retinal photoreceptors. Mediates intracellular transport of RPE65 in the retina pigment epithelium. In the inner ear, plays an important role in differentiation, morphogenesis and organization of cochlear hair cell bundles. Motor protein that is a part of the functional network formed by USH1C, USH1G, CDH23 and MYO7A that mediates mechanotransduction in cochlear hair cells. Required for normal hearing. Involved in hair-cell vesicle trafficking of aminoglycosides, which are known to induce ototoxicity. The polypeptide is Unconventional myosin-VIIa (Myo7a) (Mus musculus (Mouse)).